The following is a 765-amino-acid chain: Myotubularin-related protein 10-A (765 aa).

In terms of domain architecture, Myotubularin phosphatase spans 209-650 (FETYSDWDRE…THIKLWKLCY (442 aa)).

This sequence belongs to the protein-tyrosine phosphatase family. Non-receptor class myotubularin subfamily.

In Xenopus laevis (African clawed frog), this protein is Myotubularin-related protein 10-A (mtmr10-a).